A 60-amino-acid chain; its full sequence is Sporulation protein cse60 (60 aa).

This chain is Sporulation protein cse60 (cse60), found in Bacillus subtilis (strain 168).